The following is a 265-amino-acid chain: 4-hydroxy-tetrahydrodipicolinate reductase (265 aa).

NAD(+) is bound by residues 7–12 (GASGRM) and D33. R34 contributes to the NADP(+) binding site. NAD(+) is bound by residues 96 to 98 (GTT) and 120 to 123 (ASNF). H153 (proton donor/acceptor) is an active-site residue. (S)-2,3,4,5-tetrahydrodipicolinate is bound at residue H154. The active-site Proton donor is the K157. 163–164 (GT) provides a ligand contact to (S)-2,3,4,5-tetrahydrodipicolinate.

This sequence belongs to the DapB family.

It is found in the cytoplasm. The enzyme catalyses (S)-2,3,4,5-tetrahydrodipicolinate + NAD(+) + H2O = (2S,4S)-4-hydroxy-2,3,4,5-tetrahydrodipicolinate + NADH + H(+). It carries out the reaction (S)-2,3,4,5-tetrahydrodipicolinate + NADP(+) + H2O = (2S,4S)-4-hydroxy-2,3,4,5-tetrahydrodipicolinate + NADPH + H(+). The protein operates within amino-acid biosynthesis; L-lysine biosynthesis via DAP pathway; (S)-tetrahydrodipicolinate from L-aspartate: step 4/4. Its function is as follows. Catalyzes the conversion of 4-hydroxy-tetrahydrodipicolinate (HTPA) to tetrahydrodipicolinate. The chain is 4-hydroxy-tetrahydrodipicolinate reductase from Paraburkholderia phymatum (strain DSM 17167 / CIP 108236 / LMG 21445 / STM815) (Burkholderia phymatum).